Consider the following 207-residue polypeptide: dTTP/UTP pyrophosphatase (207 aa).

Residue D79 is the Proton acceptor of the active site.

The protein belongs to the Maf family. YhdE subfamily. A divalent metal cation serves as cofactor.

It is found in the cytoplasm. It carries out the reaction dTTP + H2O = dTMP + diphosphate + H(+). It catalyses the reaction UTP + H2O = UMP + diphosphate + H(+). Its function is as follows. Nucleoside triphosphate pyrophosphatase that hydrolyzes dTTP and UTP. May have a dual role in cell division arrest and in preventing the incorporation of modified nucleotides into cellular nucleic acids. The chain is dTTP/UTP pyrophosphatase from Nitrobacter hamburgensis (strain DSM 10229 / NCIMB 13809 / X14).